The primary structure comprises 131 residues: Fluoride-specific ion channel FluC 1 (131 aa).

3 helical membrane passes run 38–58, 69–89, and 108–128; these read FPLS…IAMM, TVMM…TALN, and IATV…ALLA. Na(+) contacts are provided by Gly79 and Ser82.

The protein belongs to the fluoride channel Fluc/FEX (TC 1.A.43) family.

It is found in the cell membrane. The enzyme catalyses fluoride(in) = fluoride(out). Its activity is regulated as follows. Na(+) is not transported, but it plays an essential structural role and its presence is essential for fluoride channel function. Functionally, fluoride-specific ion channel. Important for reducing fluoride concentration in the cell, thus reducing its toxicity. In Bifidobacterium longum (strain NCC 2705), this protein is Fluoride-specific ion channel FluC 1.